The chain runs to 451 residues: Midnolin-B (451 aa).

The Ubiquitin-like domain maps to 20-94 (MNLNIQSTTG…LTLLPSVEAG (75 aa)). Disordered regions lie at residues 187–254 (ASCT…RSRK), 331–372 (RNAK…QTEN), and 388–427 (QKRLRRKARRDSRAPYHWMPTRKSSRTSSNSSTSSGEGSL). Low complexity-rich tracts occupy residues 190–205 (TPGSTPPTTLSPTSST), 237–250 (STRGTEGTSSSPSS), and 336–347 (TSPQSTGPQQTT). A compositionally biased stretch (basic and acidic residues) spans 363–372 (SGDRLRQTEN). Over residues 388–397 (QKRLRRKARR) the composition is skewed to basic residues. A compositionally biased stretch (low complexity) spans 413–426 (RTSSNSSTSSGEGS).

It is found in the nucleus. The protein resides in the cytoplasm. Its subcellular location is the cytosol. It localises to the nucleolus. Functionally, facilitates ubiquitin-independent proteasomal degradation of polycomb protein CBX4. Plays a role in inhibiting the activity of glucokinase GCK and both glucose-induced and basal insulin secretion. In Xenopus laevis (African clawed frog), this protein is Midnolin-B (midn-b).